The primary structure comprises 209 residues: Uracil phosphoribosyltransferase (209 aa).

Residues Arg-79, Arg-104, and 131-139 (DPMLATGGT) each bind 5-phospho-alpha-D-ribose 1-diphosphate. Uracil-binding positions include Ile-194 and 199–201 (GDA). Asp-200 contacts 5-phospho-alpha-D-ribose 1-diphosphate.

Belongs to the UPRTase family. Mg(2+) is required as a cofactor.

The catalysed reaction is UMP + diphosphate = 5-phospho-alpha-D-ribose 1-diphosphate + uracil. It functions in the pathway pyrimidine metabolism; UMP biosynthesis via salvage pathway; UMP from uracil: step 1/1. With respect to regulation, allosterically activated by GTP. In terms of biological role, catalyzes the conversion of uracil and 5-phospho-alpha-D-ribose 1-diphosphate (PRPP) to UMP and diphosphate. The polypeptide is Uracil phosphoribosyltransferase (Pseudoalteromonas translucida (strain TAC 125)).